A 484-amino-acid chain; its full sequence is MKILQVASEVAPLAKTGGLADVVAALPKELRRMGHDVRVAIPFYKEVSSGNLPVRKARKSAEVALGGELHKGYLRQTALGEVPVYLVENRDLFGRDHLYGPPEGDYPDNPLRFAFFCRSVLQFLKRMDFRPDVIHCHDWQSALIPIILKYELGHDPFFNRTAVIFTIHNLAYQGVFPADALAQTGLDPSLFSVDRIEFYGRINLLKGAILAADAITTVSETYCHEILSPGQGCGLEGVLERRQADLAGILNGLDSEEWNPSLDRRIFRNYSSKSLAGKGADKRELQRELGLKAGASIPIIGMVGRIVEQKGIDLVIDLLPRFAAEELQLVILGTGDLRLMHQLHEFRNKGVKNVSINLGFKEPLAPKIYAGCDMFLMPSRFEPCGLSQLIALSYGTVPIVRRTGGLADTVIDVTANPREGNGFSFTEFSADACWDAVQRALAAYRDREGWRKIMRRGMLRDVSWRSAAGKYEELYRTCADNRRG.

Residue Lys15 coordinates ADP-alpha-D-glucose.

The protein belongs to the glycosyltransferase 1 family. Bacterial/plant glycogen synthase subfamily.

It carries out the reaction [(1-&gt;4)-alpha-D-glucosyl](n) + ADP-alpha-D-glucose = [(1-&gt;4)-alpha-D-glucosyl](n+1) + ADP + H(+). Its pathway is glycan biosynthesis; glycogen biosynthesis. Its function is as follows. Synthesizes alpha-1,4-glucan chains using ADP-glucose. This is Glycogen synthase 2 from Geobacter metallireducens (strain ATCC 53774 / DSM 7210 / GS-15).